The sequence spans 290 residues: Acetyl-coenzyme A carboxylase carboxyl transferase subunit beta (290 aa).

One can recognise a CoA carboxyltransferase N-terminal domain in the interval 28-290; the sequence is IMTKCPKCKK…TGGEYEWLQD (263 aa). Zn(2+)-binding residues include Cys32, Cys35, Cys51, and Cys54. The C4-type zinc finger occupies 32 to 54; the sequence is CPKCKKIMLTKELDKNLRVCMNC.

The protein belongs to the AccD/PCCB family. In terms of assembly, acetyl-CoA carboxylase is a heterohexamer composed of biotin carboxyl carrier protein (AccB), biotin carboxylase (AccC) and two subunits each of ACCase subunit alpha (AccA) and ACCase subunit beta (AccD). Requires Zn(2+) as cofactor.

It localises to the cytoplasm. It carries out the reaction N(6)-carboxybiotinyl-L-lysyl-[protein] + acetyl-CoA = N(6)-biotinyl-L-lysyl-[protein] + malonyl-CoA. It participates in lipid metabolism; malonyl-CoA biosynthesis; malonyl-CoA from acetyl-CoA: step 1/1. Its function is as follows. Component of the acetyl coenzyme A carboxylase (ACC) complex. Biotin carboxylase (BC) catalyzes the carboxylation of biotin on its carrier protein (BCCP) and then the CO(2) group is transferred by the transcarboxylase to acetyl-CoA to form malonyl-CoA. The sequence is that of Acetyl-coenzyme A carboxylase carboxyl transferase subunit beta from Bacillus velezensis (strain DSM 23117 / BGSC 10A6 / LMG 26770 / FZB42) (Bacillus amyloliquefaciens subsp. plantarum).